A 364-amino-acid polypeptide reads, in one-letter code: Peptide chain release factor 1 (364 aa).

Q232 carries the post-translational modification N5-methylglutamine.

It belongs to the prokaryotic/mitochondrial release factor family. In terms of processing, methylated by PrmC. Methylation increases the termination efficiency of RF1.

Its subcellular location is the cytoplasm. Peptide chain release factor 1 directs the termination of translation in response to the peptide chain termination codons UAG and UAA. The protein is Peptide chain release factor 1 of Sorangium cellulosum (strain So ce56) (Polyangium cellulosum (strain So ce56)).